The following is a 380-amino-acid chain: Asporin (380 aa).

A signal peptide spans 1–14 (MKEYVLLLFLALCS). Residues 15 to 32 (AKPFFSPSHIALKNMMLK) constitute a propeptide that is removed on maturation. A compositionally biased stretch (acidic residues) spans 35–54 (EDTDDDDDDDDDDDDDDEDN). Residues 35–59 (EDTDDDDDDDDDDDDDDEDNSLFPT) are disordered. S55 carries O-linked (GalNAc...) serine glycosylation. One can recognise an LRRNT domain in the interval 66 to 102 (FFPFDLFPMCPFGCQCYSRVVHCSDLGLTSVPTNIPF). Intrachain disulfides connect C75/C81 and C79/C88. LRR repeat units follow at residues 103 to 124 (DTRM…DFKG), 127 to 148 (SLYG…AFLT), 151 to 173 (KLRR…PKSL), 174 to 193 (AELR…TFKG), 196 to 219 (ALHV…AFEG), 242 to 263 (TLLE…DFKR), 266 to 287 (ELQR…SLAN), 290 to 312 (RVRE…PELK), 313 to 334 (YLQI…DFCP), 335 to 357 (TVPK…VKYW), and 358 to 380 (EMQP…NFGM). The interaction with TGFB1 stretch occupies residues 166–212 (PLNLPKSLAELRIHENKVKKIQKDTFKGMNALHVLEMSANPLDNNGI). The N-linked (GlcNAc...) asparagine glycan is linked to N282. C333 and C366 are disulfide-bonded.

It belongs to the small leucine-rich proteoglycan (SLRP) family. SLRP class I subfamily. As to quaternary structure, interacts with TGFB1, TGFB2 and TGFB3. DCN, BGN, and FMOD inhibit binding to TGFB1. Interacts with BMP2. Interacts in vitro with type II collagen. Interacts with type I collagen. DCN can inhibit collagen binding. There is no serine/glycine dipeptide sequence expected for the attachment of O-linked glycosaminoglycans and this is probably not a proteoglycan. The O-linked polysaccharide on 54-Ser is probably the mucin type linked to GalNAc. Post-translationally, the N-linked glycan at Asn-282 is composed of variable structures of GlcNAc, mannose, fucose, HexNAc and hexose. In terms of tissue distribution, higher levels in osteoarthritic articular cartilage, aorta, uterus. Moderate expression in small intestine, heart, liver, bladder, ovary, stomach, and in the adrenal, thyroid, and mammary glands. Low expression in trachea, bone marrow, and lung. Colocalizes with TGFB1 in chondrocytes within osteoarthritic (OA) lesions of articular cartilage.

The protein resides in the secreted. It is found in the extracellular space. The protein localises to the extracellular matrix. Its function is as follows. Negatively regulates periodontal ligament (PDL) differentiation and mineralization to ensure that the PDL is not ossified and to maintain homeostasis of the tooth-supporting system. Inhibits BMP2-induced cytodifferentiation of PDL cells by preventing its binding to BMPR1B/BMP type-1B receptor, resulting in inhibition of BMP-dependent activation of SMAD proteins. Critical regulator of TGF-beta in articular cartilage and plays an essential role in cartilage homeostasis and osteoarthritis (OA) pathogenesis. Negatively regulates chondrogenesis in the articular cartilage by blocking the TGF-beta/receptor interaction on the cell surface and inhibiting the canonical TGF-beta/Smad signal. Binds calcium and plays a role in osteoblast-driven collagen biomineralization activity. This is Asporin (ASPN) from Homo sapiens (Human).